A 1054-amino-acid polypeptide reads, in one-letter code: Bifunctional glutamine synthetase adenylyltransferase/adenylyl-removing enzyme (1054 aa).

The segment at 1-535 (MRKTLPSIGA…LHRKLFYRPL (535 aa)) is adenylyl removase. Composition is skewed to polar residues over residues 138-150 (SFSS…QGSD) and 165-175 (DTANTDLSTPG). The disordered stretch occupies residues 138 to 175 (SFSSESQQPQGSDSDSEFSFGADLSADDTANTDLSTPG). An adenylyl transferase region spans residues 541–1054 (NISVGTLKLS…WGVDSIEHDY (514 aa)).

Belongs to the GlnE family. The cofactor is Mg(2+).

It carries out the reaction [glutamine synthetase]-O(4)-(5'-adenylyl)-L-tyrosine + phosphate = [glutamine synthetase]-L-tyrosine + ADP. The catalysed reaction is [glutamine synthetase]-L-tyrosine + ATP = [glutamine synthetase]-O(4)-(5'-adenylyl)-L-tyrosine + diphosphate. Involved in the regulation of glutamine synthetase GlnA, a key enzyme in the process to assimilate ammonia. When cellular nitrogen levels are high, the C-terminal adenylyl transferase (AT) inactivates GlnA by covalent transfer of an adenylyl group from ATP to specific tyrosine residue of GlnA, thus reducing its activity. Conversely, when nitrogen levels are low, the N-terminal adenylyl removase (AR) activates GlnA by removing the adenylyl group by phosphorolysis, increasing its activity. The regulatory region of GlnE binds the signal transduction protein PII (GlnB) which indicates the nitrogen status of the cell. This chain is Bifunctional glutamine synthetase adenylyltransferase/adenylyl-removing enzyme, found in Corynebacterium diphtheriae (strain ATCC 700971 / NCTC 13129 / Biotype gravis).